We begin with the raw amino-acid sequence, 568 residues long: Zinc finger protein 583 (568 aa).

The 72-residue stretch at 6–77 folds into the KRAB domain; it reads LTFEDVSVNF…QKKGARDTCP (72 aa). 12 consecutive C2H2-type zinc fingers follow at residues 211-233, 239-261, 267-289, 295-317, 323-345, 351-373, 379-401, 407-429, 435-457, 463-485, 491-513, and 519-541; these read LKCS…QRIH, YACV…KRIH, YECK…QRVH, YQCK…QRIH, FECI…QRIH, YVCH…QRIH, YECA…QRSH, YICK…QRIH, YECN…QRIH, and YECK…EKVH.

This sequence belongs to the krueppel C2H2-type zinc-finger protein family.

It is found in the nucleus. May be involved in transcriptional regulation. This chain is Zinc finger protein 583 (Znf583), found in Mus musculus (Mouse).